We begin with the raw amino-acid sequence, 285 residues long: Cold sensitive U2 snRNA suppressor 2 (285 aa).

One can recognise an RRM 1 domain in the interval 45–130 (TSIYISGLPT…KQIRVERAQF (86 aa)). Basic and acidic residues predominate over residues 135–149 (GDNMHGKENDLKEFN). Positions 135-154 (GDNMHGKENDLKEFNGPEPP) are disordered. Serine 163 is subject to Phosphoserine. Residues 183–265 (RTVIFANVFN…QKLLAFISGD (83 aa)) form the RRM 2 domain. The tract at residues 265-285 (DENTSSTSDKNEDSEVEDDLI) is disordered. A compositionally biased stretch (acidic residues) spans 276–285 (EDSEVEDDLI).

It belongs to the HTATSF1 family. In terms of assembly, interacts with PRP11. Associates with the U2 snRNA.

Functionally, U2 snRNP protein which helps to refold U2 into a structure favorable for its binding to SF3b and SF3a prior to spliceosome assembly. Mediates functional interactions between U2 RNA and PRP5. Enforces ATP dependence during formation of the prespliceosome by brokering an interaction between PRP5 and the U2 snRNP that depends on correct U2 RNA structure. The polypeptide is Cold sensitive U2 snRNA suppressor 2 (CUS2) (Saccharomyces cerevisiae (strain ATCC 204508 / S288c) (Baker's yeast)).